Reading from the N-terminus, the 35-residue chain is Cytochrome c-550 (35 aa).

Positions 17, 20, and 21 each coordinate heme c.

Binds 1 heme c group covalently per subunit.

Functionally, monoheme cytochrome which functions as an electron carrier in the reduction of nitrite by membrane vesicles. In Virgibacillus halodenitrificans (Bacillus halodenitrificans), this protein is Cytochrome c-550.